We begin with the raw amino-acid sequence, 254 residues long: Guanylate kinase (254 aa).

In terms of domain architecture, Guanylate kinase-like spans 64 to 243 (KHLVVLAGPT…AAREVVDLMM (180 aa)). 71-78 (GPTAVGKG) contributes to the ATP binding site.

This sequence belongs to the guanylate kinase family.

Its subcellular location is the cytoplasm. The catalysed reaction is GMP + ATP = GDP + ADP. Essential for recycling GMP and indirectly, cGMP. In Leifsonia xyli subsp. xyli (strain CTCB07), this protein is Guanylate kinase.